Reading from the N-terminus, the 104-residue chain is L-rhamnose mutarotase (104 aa).

Residue Y18 participates in substrate binding. Catalysis depends on H22, which acts as the Proton donor. Residues Y41 and 76–77 each bind substrate; that span reads WW.

The protein belongs to the rhamnose mutarotase family. As to quaternary structure, homodimer.

It localises to the cytoplasm. The catalysed reaction is alpha-L-rhamnose = beta-L-rhamnose. The protein operates within carbohydrate metabolism; L-rhamnose metabolism. Its function is as follows. Involved in the anomeric conversion of L-rhamnose. This chain is L-rhamnose mutarotase, found in Burkholderia orbicola (strain MC0-3).